The chain runs to 495 residues: DNA double-strand break repair helicase HerA (495 aa).

Residues Arg-142, 151–156 (GSGKSN), and 459–460 (KI) contribute to the ATP site.

The protein belongs to the HerA family. In terms of assembly, interacts with Rad50 and Mre11.

The catalysed reaction is Couples ATP hydrolysis with the unwinding of duplex DNA at the replication fork by translocating in the 5'-3' direction. This creates two antiparallel DNA single strands (ssDNA). The leading ssDNA polymer is the template for DNA polymerase III holoenzyme which synthesizes a continuous strand.. It catalyses the reaction ATP + H2O = ADP + phosphate + H(+). The enzyme catalyses Couples ATP hydrolysis with the unwinding of duplex DNA by translocating in the 3'-5' direction.. With respect to regulation, ATPase activity is slightly stimulated by either circular single- or double-stranded (ds)DNA with a weak preference for dsDNA. Its function is as follows. Involved in DNA double-strand break (DSB) repair. Probably acts with NurA to stimulate resection of the 5' strand and produce the long 3' single-strand that is required for RadA loading. Has DNA-dependent ATPase activity and bidirectional DNA helicase activity. Loads on either a 3' or a 5' DNA tail for subsequent DNA unwinding; has no activity on blunt-end DNA. This is DNA double-strand break repair helicase HerA from Sulfolobus acidocaldarius (strain ATCC 33909 / DSM 639 / JCM 8929 / NBRC 15157 / NCIMB 11770).